The sequence spans 493 residues: MRERVTFIHNDYSLDPEALDNQDAGLLGPQIETVRQDKLTIPFGELPSELTDILQEYEALHIRWASPVKSETMDPFTSRISPGLHVYATPVLPSSCNPTKLCSWLQRFGPLDCSKPEAFTEFQQSTSTSPSFSFYEALEDLHSFITTSSQEFCPELDSVCNARLRSLLTASGLDLSFDKAANALVVSALWPLRPQTVAVPASSARRVEVGIFINDRSQPNMKENELGVAGVLSVLGDQKKPSPTIFTFPARHRRDGSVFTSKFLTPTGLHPTLQLSFNSNKLPSADGECAPYAFLTLPKTIFADRYQLGDELFLASKNLTALRYTTLPVDLEAPAYTTETWGSSILLGLAPPDPGTEKPWSVEIPLHLRYLKPSATGQVEIEIPYPAVFWACSSEEGTLESPFDRLHVGYDYLFPRDTVFWHANPQPENGSRLMNRVTVPVLDDDGVGSIRSGTAIAVAIGFAWVMWKLVSVMLKSDRAPAGVTKETKQKKSH.

The Lumenal segment spans residues 1–453; it reads MRERVTFIHN…DDGVGSIRSG (453 aa). Residues Asn318 and Asn429 are each glycosylated (N-linked (GlcNAc...) asparagine). A helical transmembrane segment spans residues 454–474; sequence TAIAVAIGFAWVMWKLVSVML. The Cytoplasmic portion of the chain corresponds to 475–493; sequence KSDRAPAGVTKETKQKKSH.

Belongs to the PIGX family.

The protein resides in the endoplasmic reticulum membrane. The protein operates within glycolipid biosynthesis; glycosylphosphatidylinositol-anchor biosynthesis. Functionally, required for proper folding and/or the stability of a subset of proteins in the endoplasmic reticulum. Component of glycosylphosphatidylinositol-mannosyltransferase 1 which transfers the first of the 4 mannoses in the GPI-anchor precursors during GPI-anchor biosynthesis. Probably acts by stabilizing the mannosyltransferase GPI14. The chain is Protein PBN1 (PBN1) from Gibberella zeae (strain ATCC MYA-4620 / CBS 123657 / FGSC 9075 / NRRL 31084 / PH-1) (Wheat head blight fungus).